The chain runs to 601 residues: UBA domain-containing protein 3 (601 aa).

In terms of domain architecture, Arf-GAP spans 7–129 (ETAIRELVQS…LFLDENHSTN (123 aa)). Disordered regions lie at residues 123-158 (DENH…KSRY) and 289-310 (EPNQ…SSMG). Low complexity predominate over residues 139–156 (TKSSSQSSPMASTSTSKS). The UBA domain occupies 157 to 197 (RYADSLSTLHDMGFSDDSVNTHALEETNGDVTRAIEKIVQH).

The sequence is that of UBA domain-containing protein 3 (ucp3) from Schizosaccharomyces pombe (strain 972 / ATCC 24843) (Fission yeast).